The sequence spans 312 residues: uncharacterized protein (312 aa).

ATP is bound at residue 112-118 (LIGLPMV).

The protein belongs to the MurCDEF family.

This is an uncharacterized protein from Methanothermobacter thermautotrophicus (strain ATCC 29096 / DSM 1053 / JCM 10044 / NBRC 100330 / Delta H) (Methanobacterium thermoautotrophicum).